The sequence spans 54 residues: Large ribosomal subunit protein bL33 (54 aa).

Belongs to the bacterial ribosomal protein bL33 family.

In Caldicellulosiruptor saccharolyticus (strain ATCC 43494 / DSM 8903 / Tp8T 6331), this protein is Large ribosomal subunit protein bL33.